Consider the following 367-residue polypeptide: Phosphoribosylaminoimidazole-succinocarboxamide synthase (367 aa).

It belongs to the SAICAR synthetase family.

The enzyme catalyses 5-amino-1-(5-phospho-D-ribosyl)imidazole-4-carboxylate + L-aspartate + ATP = (2S)-2-[5-amino-1-(5-phospho-beta-D-ribosyl)imidazole-4-carboxamido]succinate + ADP + phosphate + 2 H(+). It participates in purine metabolism; IMP biosynthesis via de novo pathway; 5-amino-1-(5-phospho-D-ribosyl)imidazole-4-carboxamide from 5-amino-1-(5-phospho-D-ribosyl)imidazole-4-carboxylate: step 1/2. In Vibrio campbellii (strain ATCC BAA-1116), this protein is Phosphoribosylaminoimidazole-succinocarboxamide synthase.